A 323-amino-acid polypeptide reads, in one-letter code: uncharacterized protein (323 aa).

The N-terminal stretch at M1–A45 is a signal peptide. The interval F186–V227 is disordered. The next 2 membrane-spanning stretches (helical) occupy residues S269 to T289 and A290 to V310.

It is found in the cell membrane. This is an uncharacterized protein from Mycobacterium tuberculosis (strain CDC 1551 / Oshkosh).